Here is a 342-residue protein sequence, read N- to C-terminus: Ion-translocating oxidoreductase complex subunit D (342 aa).

3 consecutive transmembrane segments (helical) span residues Gly42–Leu62, Asn68–Pro90, and Ala124–Ala144. Thr171 is modified (FMN phosphoryl threonine). Transmembrane regions (helical) follow at residues Phe200–Ile220, Trp227–Ile247, Phe252–Ala272, Leu286–Pro306, and Ala308–Gln328.

It belongs to the NqrB/RnfD family. The complex is composed of six subunits: RnfA, RnfB, RnfC, RnfD, RnfE and RnfG. It depends on FMN as a cofactor.

The protein resides in the cell inner membrane. Functionally, part of a membrane-bound complex that couples electron transfer with translocation of ions across the membrane. The polypeptide is Ion-translocating oxidoreductase complex subunit D (Alcanivorax borkumensis (strain ATCC 700651 / DSM 11573 / NCIMB 13689 / SK2)).